A 206-amino-acid polypeptide reads, in one-letter code: Probable N-acetyltransferase 14 (206 aa).

Positions 9–206 (LSVREMREEE…TIVQEFRKDI (198 aa)) constitute an N-acetyltransferase domain. 2 helical membrane passes run 37–57 (LILY…ASSG) and 60–80 (FILN…IVGL).

Belongs to the camello family.

It localises to the membrane. In terms of biological role, probable acetyltransferase. The polypeptide is Probable N-acetyltransferase 14 (nat14) (Xenopus tropicalis (Western clawed frog)).